Reading from the N-terminus, the 462-residue chain is NAD(P) transhydrogenase subunit beta (462 aa).

Residues 1–3 (MSG) lie on the Periplasmic side of the membrane. A helical membrane pass occupies residues 4 to 24 (GLVTAAYIVAAILFIFSLAGL). Topologically, residues 25 to 45 (SKHETSRQGNNFGIAGMAIAL) are cytoplasmic. Residues 46–66 (IATIFGPDTGNVGWILLAMVI) form a helical membrane-spanning segment. Residues 67 to 82 (GGAIGIRLAKKVEMTE) are Periplasmic-facing. A helical transmembrane segment spans residues 83–103 (MPELVAILHSFVGLAAVLVGF). Residues 104–115 (NSYLHHDAGMAP) lie on the Cytoplasmic side of the membrane. Residues 116-136 (ILVNIHLTEVFLGIFIGAVTF) traverse the membrane as a helical segment. Over 137–164 (TGSVVAFGKLCGKISSKPLMLPNRHKMN) the chain is Periplasmic. The chain crosses the membrane as a helical span at residues 165–185 (LAALVVSFLLLIVFVRTDSVG). Over 186–188 (LQV) the chain is Cytoplasmic. A helical membrane pass occupies residues 189 to 209 (LALLIMTAIALVFGWHLVASI). The Periplasmic segment spans residues 210–215 (GGADMP). A helical transmembrane segment spans residues 216 to 236 (VVVSMLNSYSGWAAAAAGFML). Over 237–239 (SND) the chain is Cytoplasmic. Residues 240 to 260 (LLIVTGALVGSSGAILSYIMC) traverse the membrane as a helical segment. The Periplasmic segment spans residues 261–308 (KAMNRSFISVIAGGFGTDGSSTGDDQEVGEHREITAEETAELLKNSHS). Residues 309–329 (VIITPGYGMAVAQAQYPVAEI) traverse the membrane as a helical segment. Residues 330 to 462 (TEKLRARGIN…ASVDAILKAL (133 aa)) lie on the Cytoplasmic side of the membrane.

The protein belongs to the PNT beta subunit family. In terms of assembly, heterodimer of an alpha and a beta chain.

It is found in the cell inner membrane. It carries out the reaction NAD(+) + NADPH + H(+)(in) = NADH + NADP(+) + H(+)(out). In terms of biological role, the transhydrogenation between NADH and NADP is coupled to respiration and ATP hydrolysis and functions as a proton pump across the membrane. The sequence is that of NAD(P) transhydrogenase subunit beta (pntB) from Escherichia coli O157:H7.